The primary structure comprises 285 residues: 4-diphosphocytidyl-2-C-methyl-D-erythritol kinase (285 aa).

Lys-12 is an active-site residue. 95-105 (PMGGGVGGGSS) is an ATP binding site. Asp-137 is an active-site residue.

This sequence belongs to the GHMP kinase family. IspE subfamily.

The catalysed reaction is 4-CDP-2-C-methyl-D-erythritol + ATP = 4-CDP-2-C-methyl-D-erythritol 2-phosphate + ADP + H(+). The protein operates within isoprenoid biosynthesis; isopentenyl diphosphate biosynthesis via DXP pathway; isopentenyl diphosphate from 1-deoxy-D-xylulose 5-phosphate: step 3/6. Catalyzes the phosphorylation of the position 2 hydroxy group of 4-diphosphocytidyl-2C-methyl-D-erythritol. The sequence is that of 4-diphosphocytidyl-2-C-methyl-D-erythritol kinase from Actinobacillus pleuropneumoniae serotype 5b (strain L20).